Here is a 413-residue protein sequence, read N- to C-terminus: 1-deoxy-D-xylulose 5-phosphate reductoisomerase (413 aa).

Thr-13, Gly-14, Ser-15, Ile-16, Lys-40, Asn-41, and Asn-127 together coordinate NADPH. Lys-128 lines the 1-deoxy-D-xylulose 5-phosphate pocket. NADPH is bound at residue Glu-129. Asp-153 contacts Mn(2+). Residues Ser-154, Glu-155, Ser-184, and His-207 each contribute to the 1-deoxy-D-xylulose 5-phosphate site. A Mn(2+)-binding site is contributed by Glu-155. Gly-213 provides a ligand contact to NADPH. 1-deoxy-D-xylulose 5-phosphate-binding residues include Ser-220, Asn-225, Lys-226, and Glu-229. Glu-229 contributes to the Mn(2+) binding site.

The protein belongs to the DXR family. The cofactor is Mg(2+). It depends on Mn(2+) as a cofactor.

It catalyses the reaction 2-C-methyl-D-erythritol 4-phosphate + NADP(+) = 1-deoxy-D-xylulose 5-phosphate + NADPH + H(+). Its pathway is isoprenoid biosynthesis; isopentenyl diphosphate biosynthesis via DXP pathway; isopentenyl diphosphate from 1-deoxy-D-xylulose 5-phosphate: step 1/6. Its function is as follows. Catalyzes the NADPH-dependent rearrangement and reduction of 1-deoxy-D-xylulose-5-phosphate (DXP) to 2-C-methyl-D-erythritol 4-phosphate (MEP). The chain is 1-deoxy-D-xylulose 5-phosphate reductoisomerase from Nitrosomonas eutropha (strain DSM 101675 / C91 / Nm57).